Consider the following 209-residue polypeptide: Uracil phosphoribosyltransferase (209 aa).

Residues Arg-79, Arg-104, and 131-139 (DPMLATGNS) each bind 5-phospho-alpha-D-ribose 1-diphosphate. Uracil-binding positions include Ile-194 and 199-201 (GDA). A 5-phospho-alpha-D-ribose 1-diphosphate-binding site is contributed by Asp-200.

This sequence belongs to the UPRTase family. Mg(2+) serves as cofactor.

It catalyses the reaction UMP + diphosphate = 5-phospho-alpha-D-ribose 1-diphosphate + uracil. Its pathway is pyrimidine metabolism; UMP biosynthesis via salvage pathway; UMP from uracil: step 1/1. Its activity is regulated as follows. Allosterically activated by GTP. Functionally, catalyzes the conversion of uracil and 5-phospho-alpha-D-ribose 1-diphosphate (PRPP) to UMP and diphosphate. This Acidovorax ebreus (strain TPSY) (Diaphorobacter sp. (strain TPSY)) protein is Uracil phosphoribosyltransferase.